The primary structure comprises 1342 residues: DNA-directed RNA polymerase subunit beta (1342 aa).

Belongs to the RNA polymerase beta chain family. In terms of assembly, the RNAP catalytic core consists of 2 alpha, 1 beta, 1 beta' and 1 omega subunit. When a sigma factor is associated with the core the holoenzyme is formed, which can initiate transcription.

The catalysed reaction is RNA(n) + a ribonucleoside 5'-triphosphate = RNA(n+1) + diphosphate. Functionally, DNA-dependent RNA polymerase catalyzes the transcription of DNA into RNA using the four ribonucleoside triphosphates as substrates. In Histophilus somni (strain 2336) (Haemophilus somnus), this protein is DNA-directed RNA polymerase subunit beta.